Consider the following 158-residue polypeptide: Crossover junction endodeoxyribonuclease RuvC (158 aa).

Active-site residues include Asp7, Glu66, and Asp139. Mg(2+)-binding residues include Asp7, Glu66, and Asp139.

This sequence belongs to the RuvC family. In terms of assembly, homodimer which binds Holliday junction (HJ) DNA. The HJ becomes 2-fold symmetrical on binding to RuvC with unstacked arms; it has a different conformation from HJ DNA in complex with RuvA. In the full resolvosome a probable DNA-RuvA(4)-RuvB(12)-RuvC(2) complex forms which resolves the HJ. The cofactor is Mg(2+).

The protein resides in the cytoplasm. The enzyme catalyses Endonucleolytic cleavage at a junction such as a reciprocal single-stranded crossover between two homologous DNA duplexes (Holliday junction).. Functionally, the RuvA-RuvB-RuvC complex processes Holliday junction (HJ) DNA during genetic recombination and DNA repair. Endonuclease that resolves HJ intermediates. Cleaves cruciform DNA by making single-stranded nicks across the HJ at symmetrical positions within the homologous arms, yielding a 5'-phosphate and a 3'-hydroxyl group; requires a central core of homology in the junction. The consensus cleavage sequence is 5'-(A/T)TT(C/G)-3'. Cleavage occurs on the 3'-side of the TT dinucleotide at the point of strand exchange. HJ branch migration catalyzed by RuvA-RuvB allows RuvC to scan DNA until it finds its consensus sequence, where it cleaves and resolves the cruciform DNA. The chain is Crossover junction endodeoxyribonuclease RuvC from Nitratiruptor sp. (strain SB155-2).